The following is a 205-amino-acid chain: Mitochondrial ATP-independent inner membrane protease subunit 2 (205 aa).

Active-site residues include Glu-59 and Arg-104.

This sequence belongs to the peptidase S26 family. IMP1 subfamily. As to quaternary structure, heterodimer of 2 subunits, IMP1A/B and IMP12.

It localises to the mitochondrion inner membrane. Functionally, catalyzes the removal of transit peptides required for the targeting of proteins from the mitochondrial matrix, across the inner membrane, into the inter-membrane space. The protein is Mitochondrial ATP-independent inner membrane protease subunit 2 of Arabidopsis thaliana (Mouse-ear cress).